The following is a 233-amino-acid chain: Putative T-box protein 41 (233 aa).

The T-box DNA-binding region spans 1–146 (MTVTRNGCRI…MNPHARHFLK (146 aa)).

It is found in the nucleus. In Caenorhabditis elegans, this protein is Putative T-box protein 41 (tbx-41).